The sequence spans 121 residues: Cysteine-rich neurotrophic factor (121 aa).

An N-terminal signal peptide occupies residues 1–18; that stretch reads MLLKLIVALSLTLTLASA. N57 carries N-linked (GlcNAc...) asparagine glycosylation.

The protein resides in the secreted. In terms of biological role, interacts with the p75 low-affinity neurotrophin receptor. Evokes neurite outgrowth and modulated calcium currents in pedal motor neurons. May be involved in target-derived trophic support for motor neurons. The polypeptide is Cysteine-rich neurotrophic factor (Lymnaea stagnalis (Great pond snail)).